We begin with the raw amino-acid sequence, 52 residues long: Insulin (52 aa).

3 cysteine pairs are disulfide-bonded: Cys7–Cys38, Cys19–Cys51, and Cys37–Cys42.

It belongs to the insulin family. Heterodimer of a B chain and an A chain linked by two disulfide bonds.

It is found in the secreted. Insulin decreases blood glucose concentration. It increases cell permeability to monosaccharides, amino acids and fatty acids. It accelerates glycolysis, the pentose phosphate cycle, and glycogen synthesis in liver. This chain is Insulin (ins), found in Polypterus senegalus (Senegal bichir).